The following is a 631-amino-acid chain: MAAHLVKRCTCLLREAARQAPAMAPVGRLRLAWVAHKTLTSSATSPISHLPGSLMEPVEKERASTPYIEKQVDHLIKKATRPEELLELLGGSHDLDSNQAAMVLIRLSHLLSEKPEDKGLLIQDAHFHQLLCLLNSQIASVWHGTLSKLLGSLYALGIPKASKELQSVEQEVRWRMRKLKYKHLAFLAESCATLSQEQHSQELLAELLTHLERRWTEIEDSHTLVTVMMKVGHLSEPLMNRLEDKCLELVEHFGPNELRKVLVMLAAQSRRSVPLLRAISYHLVQKPFSLTKDVLLDVAYAYGKLSFHQTQVSQRLATDLLSLMPSLTSGEVAHCAKSFALLKWLSLPLFEAFAQHVLNRAQDITLPHLCSVLLAFARLNFHPDQEDQFFSLVHEKLGSELPGLEPALQVDLVWALCVLQQAREAELQAVLHPEFHIQFLGGKSQKDQNTFQKLLHINATALLEYPEYSGPLLPASAVAPGPSALDRKVTPLQKELQETLKGLLGSADKGSLEVATQYGWVLDAEVLLDSDGEFLPVRDFVAPHLAQPTGSQSPPPGSKRLAFLRWEFPNFNSRSKDLLGRFVLARRHIVAAGFLIVDVPFYEWLELKSEWQKGAYLKDKMRKAVAEELAK.

A mitochondrion-targeting transit peptide spans 1 to 107 (MAAHLVKRCT…NQAAMVLIRL (107 aa)). S553 is modified (phosphoserine). The region spanning 561–619 (LAFLRWEFPNFNSRSKDLLGRFVLARRHIVAAGFLIVDVPFYEWLELKSEWQKGAYLKD) is the RAP domain.

The protein belongs to the FAST kinase family. In terms of tissue distribution, ubiquitously expressed. Expression detected in spleen, thymus, testis, ovary, colon, heart, smooth muscle, kidney, brain, lung, liver and white adipose tissue with highest expression in smooth muscle.

Its subcellular location is the mitochondrion matrix. In terms of biological role, plays a role in processing of mitochondrial RNA precursors and in stabilization of a subset of mature mitochondrial RNA species, such as MT-CO1, MT-CO2, MT-CYB, MT-CO3, MT-ND3, MT-ND5 and MT-ATP8/6. May play a role in cell cycle progression. In Homo sapiens (Human), this protein is FAST kinase domain-containing protein 4.